A 182-amino-acid chain; its full sequence is Probable inosine/xanthosine triphosphatase (182 aa).

Glutamate 42 and aspartate 69 together coordinate Mg(2+).

It belongs to the YjjX NTPase family. In terms of assembly, homodimer. It depends on Mg(2+) as a cofactor. The cofactor is Mn(2+).

The enzyme catalyses XTP + H2O = XDP + phosphate + H(+). The catalysed reaction is ITP + H2O = IDP + phosphate + H(+). Its function is as follows. Phosphatase that hydrolyzes non-canonical purine nucleotides such as XTP and ITP to their respective diphosphate derivatives. Probably excludes non-canonical purines from DNA/RNA precursor pool, thus preventing their incorporation into DNA/RNA and avoiding chromosomal lesions. The protein is Probable inosine/xanthosine triphosphatase of Methanothermobacter thermautotrophicus (strain ATCC 29096 / DSM 1053 / JCM 10044 / NBRC 100330 / Delta H) (Methanobacterium thermoautotrophicum).